The primary structure comprises 132 residues: Putative apolipoprotein(a)-like protein 2 (132 aa).

Positions 1–21 are cleaved as a signal peptide; the sequence is MEHKEVVLLLLLFLKSAPTET. The Kringle domain maps to 27–105; sequence ECYHSNGQSY…RWEYCNLTRC (79 aa). Cystine bridges form between cysteine 28–cysteine 105, cysteine 49–cysteine 88, and cysteine 77–cysteine 100. Asparagine 101 is a glycosylation site (N-linked (GlcNAc...) asparagine).

In terms of tissue distribution, expressed in liver but not in other tissues tested.

The protein localises to the secreted. In Homo sapiens (Human), this protein is Putative apolipoprotein(a)-like protein 2 (LPAL2).